The sequence spans 484 residues: NADH-quinone oxidoreductase subunit N (484 aa).

14 helical membrane-spanning segments follow: residues 11–31, 42–62, 79–98, 113–133, 134–154, 167–187, 211–231, 248–268, 279–299, 313–333, 335–355, 378–398, 408–428, and 457–477; these read SLWI…VLLI, VTYY…FNLI, MASV…MVYS, FVLV…YSLL, TLYL…AIAR, FVLG…IYGI, LIIN…LGAV, VTLF…VRIL, WSDL…VVAL, ISHV…GYGA, AFYM…IILL, FALM…LVGF, VVSA…VISA, and LVLS…DFWM.

It belongs to the complex I subunit 2 family. In terms of assembly, NDH-1 is composed of 14 different subunits. Subunits NuoA, H, J, K, L, M, N constitute the membrane sector of the complex.

The protein localises to the cell inner membrane. It carries out the reaction a quinone + NADH + 5 H(+)(in) = a quinol + NAD(+) + 4 H(+)(out). Functionally, NDH-1 shuttles electrons from NADH, via FMN and iron-sulfur (Fe-S) centers, to quinones in the respiratory chain. The immediate electron acceptor for the enzyme in this species is believed to be ubiquinone. Couples the redox reaction to proton translocation (for every two electrons transferred, four hydrogen ions are translocated across the cytoplasmic membrane), and thus conserves the redox energy in a proton gradient. This is NADH-quinone oxidoreductase subunit N from Ruthia magnifica subsp. Calyptogena magnifica.